We begin with the raw amino-acid sequence, 283 residues long: ATP phosphoribosyltransferase (283 aa).

This sequence belongs to the ATP phosphoribosyltransferase family. Long subfamily. The cofactor is Mg(2+).

It is found in the cytoplasm. It catalyses the reaction 1-(5-phospho-beta-D-ribosyl)-ATP + diphosphate = 5-phospho-alpha-D-ribose 1-diphosphate + ATP. Its pathway is amino-acid biosynthesis; L-histidine biosynthesis; L-histidine from 5-phospho-alpha-D-ribose 1-diphosphate: step 1/9. Its activity is regulated as follows. Feedback inhibited by histidine. In terms of biological role, catalyzes the condensation of ATP and 5-phosphoribose 1-diphosphate to form N'-(5'-phosphoribosyl)-ATP (PR-ATP). Has a crucial role in the pathway because the rate of histidine biosynthesis seems to be controlled primarily by regulation of HisG enzymatic activity. The sequence is that of ATP phosphoribosyltransferase from Rhodococcus jostii (strain RHA1).